A 336-amino-acid chain; its full sequence is Serpentine receptor class gamma-13 (336 aa).

8 helical membrane passes run 32–52 (LKYI…FLII), 68–88 (FFII…SEIL), 93–113 (FIYV…PSIF), 133–153 (VFLS…SAIW), 156–176 (ILTP…WNVL), 210–230 (FIVS…ALLI), 246–266 (TMVL…FAFF), and 277–297 (LLRV…IIFI).

The protein belongs to the nematode receptor-like protein srg family.

The protein resides in the membrane. The chain is Serpentine receptor class gamma-13 (srg-13) from Caenorhabditis elegans.